The sequence spans 514 residues: Membrane-bound lytic murein transglycosylase F (514 aa).

A signal peptide spans 1-30 (MKKLKINYLFIGILTLLLAAALWPSIPWFG). The tract at residues 31–269 (KTENHIAAIQ…RIEEKYLGHG (239 aa)) is non-LT domain. The tract at residues 270 to 514 (DDFDYVDTRS…LFTPQKKEEK (245 aa)) is LT domain. E314 is an active-site residue.

The protein in the N-terminal section; belongs to the bacterial solute-binding protein 3 family. This sequence in the C-terminal section; belongs to the transglycosylase Slt family.

Its subcellular location is the cell outer membrane. The catalysed reaction is Exolytic cleavage of the (1-&gt;4)-beta-glycosidic linkage between N-acetylmuramic acid (MurNAc) and N-acetylglucosamine (GlcNAc) residues in peptidoglycan, from either the reducing or the non-reducing ends of the peptidoglycan chains, with concomitant formation of a 1,6-anhydrobond in the MurNAc residue.. In terms of biological role, murein-degrading enzyme that degrades murein glycan strands and insoluble, high-molecular weight murein sacculi, with the concomitant formation of a 1,6-anhydromuramoyl product. Lytic transglycosylases (LTs) play an integral role in the metabolism of the peptidoglycan (PG) sacculus. Their lytic action creates space within the PG sacculus to allow for its expansion as well as for the insertion of various structures such as secretion systems and flagella. In Salmonella typhimurium (strain LT2 / SGSC1412 / ATCC 700720), this protein is Membrane-bound lytic murein transglycosylase F.